The sequence spans 201 residues: Pro-P-factor (201 aa).

The signal sequence occupies residues 1-20; sequence MKITAVIALLFSLAAASPIP. 5 propeptides span residues 21–31, 58–65, 92–99, 126–133, and 160–201; these read VADPGVVSVSK, EFEAAPAK, EFEAAPEK, and TEED…KFES. N-linked (GlcNAc...) asparagine glycans are attached at residues asparagine 187 and asparagine 194.

Post-translationally, proteolytically cleaved by kpr, probably at the C-terminal side of dibasic Lys-Arg residues. Glycosylated. Most of the precursor molecules are glycosylated on at least one site, but only a small proportion are glycosylated on both sites.

The protein localises to the secreted. Its function is as follows. In h- cells under nutritional starvation, P-factor induces alteration of cell morphology toward mating, arrest of the cell cycle at the G1 phase prior to the initiation of DNA synthesis and indirect transcriptional activation of the sxa2 gene which down-regulates the signaling pathway. The sequence is that of Pro-P-factor (map2) from Schizosaccharomyces pombe (strain 972 / ATCC 24843) (Fission yeast).